A 333-amino-acid chain; its full sequence is Acetyl-coenzyme A carboxylase carboxyl transferase subunit alpha (333 aa).

Positions 48 to 308 constitute a CoA carboxyltransferase C-terminal domain; it reads LLEQKVDALR…KEMLVEELRD (261 aa).

This sequence belongs to the AccA family. In terms of assembly, acetyl-CoA carboxylase is a heterohexamer composed of biotin carboxyl carrier protein (AccB), biotin carboxylase (AccC) and two subunits each of ACCase subunit alpha (AccA) and ACCase subunit beta (AccD).

It is found in the cytoplasm. The catalysed reaction is N(6)-carboxybiotinyl-L-lysyl-[protein] + acetyl-CoA = N(6)-biotinyl-L-lysyl-[protein] + malonyl-CoA. It participates in lipid metabolism; malonyl-CoA biosynthesis; malonyl-CoA from acetyl-CoA: step 1/1. In terms of biological role, component of the acetyl coenzyme A carboxylase (ACC) complex. First, biotin carboxylase catalyzes the carboxylation of biotin on its carrier protein (BCCP) and then the CO(2) group is transferred by the carboxyltransferase to acetyl-CoA to form malonyl-CoA. This chain is Acetyl-coenzyme A carboxylase carboxyl transferase subunit alpha, found in Chlorobium limicola (strain DSM 245 / NBRC 103803 / 6330).